Here is a 430-residue protein sequence, read N- to C-terminus: Glutamate-1-semialdehyde 2,1-aminomutase (430 aa).

Lysine 267 is subject to N6-(pyridoxal phosphate)lysine.

Belongs to the class-III pyridoxal-phosphate-dependent aminotransferase family. HemL subfamily. As to quaternary structure, homodimer. The cofactor is pyridoxal 5'-phosphate.

The protein resides in the cytoplasm. The catalysed reaction is (S)-4-amino-5-oxopentanoate = 5-aminolevulinate. The protein operates within porphyrin-containing compound metabolism; protoporphyrin-IX biosynthesis; 5-aminolevulinate from L-glutamyl-tRNA(Glu): step 2/2. This chain is Glutamate-1-semialdehyde 2,1-aminomutase, found in Thermomicrobium roseum (strain ATCC 27502 / DSM 5159 / P-2).